Here is a 54-residue protein sequence, read N- to C-terminus: MGKYKPPAERKYGRGVQVCRRCGSRDSVIQKYGLYLCRQCFREVAYEMGFKKTR.

Residues Cys19, Cys22, Cys37, and Cys40 each coordinate Zn(2+).

This sequence belongs to the universal ribosomal protein uS14 family. Zinc-binding uS14 subfamily. Part of the 30S ribosomal subunit. Zn(2+) serves as cofactor.

Binds 16S rRNA, required for the assembly of 30S particles. In Sulfurisphaera tokodaii (strain DSM 16993 / JCM 10545 / NBRC 100140 / 7) (Sulfolobus tokodaii), this protein is Small ribosomal subunit protein uS14.